A 129-amino-acid polypeptide reads, in one-letter code: NADH-ubiquinone oxidoreductase chain 3 (129 aa).

A run of 3 helical transmembrane segments spans residues 4 to 24 (FYMY…WLLA), 48 to 68 (AAFS…DLEI), and 82 to 102 (GLYG…AFIL).

The protein belongs to the complex I subunit 3 family.

It localises to the mitochondrion membrane. The catalysed reaction is a ubiquinone + NADH + 5 H(+)(in) = a ubiquinol + NAD(+) + 4 H(+)(out). Its function is as follows. Core subunit of the mitochondrial membrane respiratory chain NADH dehydrogenase (Complex I) that is believed to belong to the minimal assembly required for catalysis. Complex I functions in the transfer of electrons from NADH to the respiratory chain. The immediate electron acceptor for the enzyme is believed to be ubiquinone. This Candida albicans (strain SC5314 / ATCC MYA-2876) (Yeast) protein is NADH-ubiquinone oxidoreductase chain 3 (NAD3).